Here is a 51-residue protein sequence, read N- to C-terminus: Cyclic phosphodiesterase (51 aa).

The active-site Proton donor/acceptor is the His11. Thr13 is a binding site for substrate. Catalysis depends on His38, which acts as the Proton donor/acceptor. The substrate site is built by Ser40 and Tyr43.

It belongs to the 2H phosphoesterase superfamily. CPD1 family.

Functionally, hydrolyzes ADP-ribose 1'',2''-cyclic phosphate (Appr&gt;1) that is produced during tRNA splicing into ADP-ribose 1''-phosphate (Appr-1''p). The sequence is that of Cyclic phosphodiesterase from Triticum aestivum (Wheat).